A 77-amino-acid chain; its full sequence is Small nuclear ribonucleoprotein G (77 aa).

Residues 4-76 (AGAPDLKKYL…VIMIETLDKM (73 aa)) enclose the Sm domain.

Belongs to the snRNP Sm proteins family. In terms of assembly, belongs to the 40S cdc5-associated complex (or cwf complex), a spliceosome sub-complex reminiscent of a late-stage spliceosome composed of the U2, U5 and U6 snRNAs and at least brr2, cdc5, cwf2/prp3, cwf3/syf1, cwf4/syf3, cwf5/ecm2, spp42/cwf6, cwf7/spf27, cwf8, cwf9, cwf10, cwf11, cwf12, prp45/cwf13, cwf14, cwf15, cwf16, cwf17, cwf18, cwf19, cwf20, cwf21, cwf22, cwf23, cwf24, cwf25, cwf26, cyp7/cwf27, cwf28, cwf29/ist3, lea1, msl1, prp5/cwf1, prp10, prp12/sap130, prp17, prp22, sap61, sap62, sap114, sap145, slu7, smb1, smd1, smd3, smf1, smg1 and syf2.

The protein resides in the nucleus. Its subcellular location is the cytoplasm. In terms of biological role, plays a role in pre-mRNA splicing as a core component of the spliceosomal U1, U2, U4 and U5 small nuclear ribonucleoproteins (snRNPs), the building blocks of the spliceosome. The protein is Small nuclear ribonucleoprotein G (smg1) of Schizosaccharomyces pombe (strain 972 / ATCC 24843) (Fission yeast).